Reading from the N-terminus, the 500-residue chain is L-arabinose isomerase (500 aa).

Residues E306, E333, H350, and H450 each coordinate Mn(2+).

This sequence belongs to the arabinose isomerase family. Homohexamer. Mn(2+) is required as a cofactor.

It catalyses the reaction beta-L-arabinopyranose = L-ribulose. It participates in carbohydrate degradation; L-arabinose degradation via L-ribulose; D-xylulose 5-phosphate from L-arabinose (bacterial route): step 1/3. Catalyzes the conversion of L-arabinose to L-ribulose. The polypeptide is L-arabinose isomerase (Shigella flexneri serotype 5b (strain 8401)).